Consider the following 206-residue polypeptide: LexA repressor (206 aa).

Residues 28–48 (RAEIARELGFRSANAAEEHLK) constitute a DNA-binding region (H-T-H motif). Active-site for autocatalytic cleavage activity residues include Ser-123 and Lys-160.

Belongs to the peptidase S24 family. As to quaternary structure, homodimer.

It carries out the reaction Hydrolysis of Ala-|-Gly bond in repressor LexA.. Functionally, represses a number of genes involved in the response to DNA damage (SOS response), including recA and lexA. In the presence of single-stranded DNA, RecA interacts with LexA causing an autocatalytic cleavage which disrupts the DNA-binding part of LexA, leading to derepression of the SOS regulon and eventually DNA repair. This is LexA repressor from Vibrio parahaemolyticus serotype O3:K6 (strain RIMD 2210633).